The sequence spans 274 residues: Probable starch degradation products transport system permease protein AmyC (274 aa).

Transmembrane regions (helical) follow at residues 11–31, 73–93, 103–123, 139–159, 184–204, and 238–258; these read LTFL…IILV, LIIT…TAYA, VIIY…VMIP, LVFM…YGAL, IILP…IMWI, and WNLG…FYFL. An ABC transmembrane type-1 domain is found at 69 to 259; it reads FSNTLIITVF…LPVVIFYFLA (191 aa).

It belongs to the binding-protein-dependent transport system permease family. MalFG subfamily.

The protein localises to the cell membrane. Its function is as follows. Probably part of a binding-protein-dependent transport system starch degradation products. Probably responsible for the translocation of the substrate across the membrane. This Thermoanaerobacterium thermosulfurigenes (Clostridium thermosulfurogenes) protein is Probable starch degradation products transport system permease protein AmyC (amyC).